The chain runs to 440 residues: Collagen alpha-1(XXVI) chain (440 aa).

The first 20 residues, 1-20 (MKLVLLLPWACCCLCGSALA), serve as a signal peptide directing secretion. Residues 52–128 (RRHWCHHTVT…PGFTGSNCEE (77 aa)) form the EMI domain. Disulfide bonds link cysteine 56–cysteine 118, cysteine 83–cysteine 89, and cysteine 117–cysteine 126. N-linked (GlcNAc...) asparagine glycosylation is present at asparagine 70. N-linked (GlcNAc...) asparagine glycosylation is present at asparagine 132. Disordered regions lie at residues 157–362 (EQPS…EGEG) and 390–440 (LASP…GDRK). The region spanning 199-267 (GPAGPPGQMG…PGPAGSPGLL (69 aa)) is the Collagen-like 1 domain. Composition is skewed to pro residues over residues 200–215 (PAGP…PAGP), 231–243 (VGPP…PGPR), and 252–261 (PGPPGPPGPA). Polar residues predominate over residues 269-281 (NTPQGVLYSLQTP). Residues 302-334 (GIPGPRGPPGPPGPPGPHGPPGPPGAPGSQGLV) form the Collagen-like 2 domain. The span at 306–327 (PRGPPGPPGPPGPHGPPGPPGA) shows a compositional bias: pro residues. Positions 347 to 356 (SVKEEEDKAS) are enriched in basic and acidic residues.

Homotrimer or heterotrimer. Post-translationally, hydroxylated on proline residues. In terms of processing, N-glycosylated. In terms of tissue distribution, specifically expressed in the testis and ovary in adult tissues.

It localises to the secreted. The protein resides in the extracellular space. Its subcellular location is the extracellular matrix. This chain is Collagen alpha-1(XXVI) chain (Col26a1), found in Mus musculus (Mouse).